An 88-amino-acid chain; its full sequence is Small cysteine-rich outer membrane protein OmcA (88 aa).

An N-terminal signal peptide occupies residues 1–18 (MKKTALLAALCSVVSLSS). A lipid anchor (N-palmitoyl cysteine) is attached at C19. C19 carries the S-diacylglycerol cysteine lipid modification.

Part of a disulfide cross-linked outer membrane complex (COMC) composed of the major outer membrane porin (MOMP), the small cysteine-rich protein (OmcA) and the large cysteine-rich periplasmic protein (OmcB).

It is found in the cell outer membrane. Its function is as follows. In elementary bodies (EBs, the infectious stage, which is able to survive outside the host cell) provides the structural integrity of the outer envelope through disulfide cross-links with the large cysteine-rich periplasmic protein and the major outer membrane porin. It has been described in publications as the Sarkosyl-insoluble COMC (Chlamydia outer membrane complex), and serves as the functional equivalent of peptidoglycan. The chain is Small cysteine-rich outer membrane protein OmcA (omcA) from Chlamydia trachomatis serovar B (strain Jali20/OT).